The chain runs to 552 residues: Indole-3-pyruvate decarboxylase (552 aa).

Glu52 lines the thiamine diphosphate pocket. Positions 385–466 (TSAFGAIDLR…ILVLNNEGYT (82 aa)) are thiamine pyrophosphate binding. Mg(2+) is bound by residues Asp435 and Asn462.

It belongs to the TPP enzyme family. In terms of assembly, homotetramer. A metal cation serves as cofactor. The cofactor is thiamine diphosphate.

It carries out the reaction indole-3-pyruvate + H(+) = indole-3-acetaldehyde + CO2. The protein operates within plant hormone metabolism; auxin biosynthesis. The sequence is that of Indole-3-pyruvate decarboxylase (ipdC) from Enterobacter cloacae.